We begin with the raw amino-acid sequence, 41 residues long: Large ribosomal subunit protein bL36 (41 aa).

This sequence belongs to the bacterial ribosomal protein bL36 family.

The chain is Large ribosomal subunit protein bL36 from Gluconacetobacter diazotrophicus (strain ATCC 49037 / DSM 5601 / CCUG 37298 / CIP 103539 / LMG 7603 / PAl5).